Consider the following 331-residue polypeptide: Biotin synthase (331 aa).

A Radical SAM core domain is found at 52–277 (PEVEVEGIVS…RTILRYAGGR (226 aa)). [4Fe-4S] cluster contacts are provided by C67, C71, and C74. Positions 110, 202, and 272 each coordinate [2Fe-2S] cluster.

Belongs to the radical SAM superfamily. Biotin synthase family. As to quaternary structure, homodimer. The cofactor is [4Fe-4S] cluster. [2Fe-2S] cluster is required as a cofactor.

It catalyses the reaction (4R,5S)-dethiobiotin + (sulfur carrier)-SH + 2 reduced [2Fe-2S]-[ferredoxin] + 2 S-adenosyl-L-methionine = (sulfur carrier)-H + biotin + 2 5'-deoxyadenosine + 2 L-methionine + 2 oxidized [2Fe-2S]-[ferredoxin]. It functions in the pathway cofactor biosynthesis; biotin biosynthesis; biotin from 7,8-diaminononanoate: step 2/2. Functionally, catalyzes the conversion of dethiobiotin (DTB) to biotin by the insertion of a sulfur atom into dethiobiotin via a radical-based mechanism. This Salinispora arenicola (strain CNS-205) protein is Biotin synthase.